The following is a 969-amino-acid chain: Activity-dependent neuroprotective protein a (969 aa).

A C2H2-type 1 zinc finger spans residues F74–H97. The segment at L107–H129 adopts a C2H2-type 2; atypical zinc-finger fold. C2H2-type zinc fingers lie at residues Y169–H192 and I221–H244. The segment at K401 to H423 adopts a C2H2-type 5; atypical zinc-finger fold. A C2H2-type 6; atypical zinc finger spans residues S443–H464. A C2H2-type 7 zinc finger spans residues L466–H489. The segment at T583–H608 adopts a C2H2-type 8; atypical zinc-finger fold. The C2H2-type 9; atypical zinc finger occupies Y623–H647. The interval K659–K689 is disordered. The homeobox DNA-binding region spans A732 to F774. The tract at residues D911 to S949 is disordered. The span at S929 to S946 shows a compositional bias: polar residues.

In terms of assembly, interacts with catenin beta-1/ctnnb1.

It localises to the nucleus. Its function is as follows. May be involved in transcriptional regulation. Positively modulates wnt-beta-catenin/ctnnb1 signaling. Required for embryonic neurogenesis. Required for progression through late erythroid differentiation. The chain is Activity-dependent neuroprotective protein a from Danio rerio (Zebrafish).